A 216-amino-acid polypeptide reads, in one-letter code: 3-isopropylmalate dehydratase small subunit (216 aa).

Belongs to the LeuD family. LeuD type 1 subfamily. In terms of assembly, heterodimer of LeuC and LeuD.

The catalysed reaction is (2R,3S)-3-isopropylmalate = (2S)-2-isopropylmalate. It functions in the pathway amino-acid biosynthesis; L-leucine biosynthesis; L-leucine from 3-methyl-2-oxobutanoate: step 2/4. Catalyzes the isomerization between 2-isopropylmalate and 3-isopropylmalate, via the formation of 2-isopropylmaleate. In Albidiferax ferrireducens (strain ATCC BAA-621 / DSM 15236 / T118) (Rhodoferax ferrireducens), this protein is 3-isopropylmalate dehydratase small subunit.